The following is a 344-amino-acid chain: MIKVGIIGATGYVGVELLRLLLNHSQIEIGAISSVSFDGQELNNIYKNFLGRTNLICTNMNEVIEKSDVIFTALPHGLSEDIAKKIIENNKICIDMGADFRLSNEEEYKYWYGNNFSQPELHKQSTYGLPELNKEKIKNSSLIANPGCYPTSIELALAPLLKNSLIEPNGIICDSKSGTTGSGRSLSLNTHFPEENENFAPYKIGEHRHTPEIEEILSNIANTKVTVTFTPHLLPINRGIISTIYCTPKEKIGLNSIHKIYTSFYENEQFVKVLPLGEIASIKNVRLSNNCHISFHLNHRKDQIIIISAIDNMIKGAAGQAIQNMNIILGFKENEGLNLISPAF.

Cys148 is a catalytic residue.

Belongs to the NAGSA dehydrogenase family. Type 1 subfamily.

The protein resides in the cytoplasm. The catalysed reaction is N-acetyl-L-glutamate 5-semialdehyde + phosphate + NADP(+) = N-acetyl-L-glutamyl 5-phosphate + NADPH + H(+). It functions in the pathway amino-acid biosynthesis; L-arginine biosynthesis; N(2)-acetyl-L-ornithine from L-glutamate: step 3/4. Catalyzes the NADPH-dependent reduction of N-acetyl-5-glutamyl phosphate to yield N-acetyl-L-glutamate 5-semialdehyde. The protein is N-acetyl-gamma-glutamyl-phosphate reductase of Clostridium botulinum (strain Eklund 17B / Type B).